An 87-amino-acid polypeptide reads, in one-letter code: uncharacterized protein (87 aa).

Residues 21-41 traverse the membrane as a helical segment; it reads LSSSLYSVAFFLFFFPNFLFF.

Its subcellular location is the membrane. This is an uncharacterized protein from Saccharomyces cerevisiae (strain ATCC 204508 / S288c) (Baker's yeast).